We begin with the raw amino-acid sequence, 100 residues long: Toxin Rv0299 (100 aa).

Its function is as follows. Toxic component of a type II toxin-antitoxin (TA) system. Upon expression in M.smegmatis inhibits colony formation. Its toxic effect is neutralized by coexpression with cognate antitoxin Rv0298/MT0312. The sequence is that of Toxin Rv0299 from Mycobacterium tuberculosis (strain ATCC 25618 / H37Rv).